We begin with the raw amino-acid sequence, 315 residues long: Fructose-1,6-bisphosphatase class 1 (315 aa).

The Mg(2+) site is built by Glu-90, Asp-111, Leu-113, and Asp-114. Residues 114–117, Tyr-222, and Lys-253 each bind substrate; that span reads DGSS. Glu-259 is a binding site for Mg(2+).

This sequence belongs to the FBPase class 1 family. In terms of assembly, homotetramer. The cofactor is Mg(2+).

It localises to the cytoplasm. The catalysed reaction is beta-D-fructose 1,6-bisphosphate + H2O = beta-D-fructose 6-phosphate + phosphate. The protein operates within carbohydrate biosynthesis; gluconeogenesis. The sequence is that of Fructose-1,6-bisphosphatase class 1 from Trichlorobacter lovleyi (strain ATCC BAA-1151 / DSM 17278 / SZ) (Geobacter lovleyi).